Consider the following 109-residue polypeptide: Thioredoxin 1 (109 aa).

Residues 2–109 (SDKIIHLTDD…LKEFLDANLA (108 aa)) enclose the Thioredoxin domain. Catalysis depends on nucleophile residues C33 and C36. C33 and C36 are disulfide-bonded. The residue at position 70 (K70) is an N6-acetyllysine.

Belongs to the thioredoxin family. In terms of assembly, monomer.

Its function is as follows. Participates in various redox reactions through the reversible oxidation of its active center dithiol to a disulfide and catalyzes dithiol-disulfide exchange reactions. The polypeptide is Thioredoxin 1 (trxA) (Escherichia coli O157:H7).